We begin with the raw amino-acid sequence, 521 residues long: Glucose-6-phosphate isomerase (521 aa).

Glutamate 327 (proton donor) is an active-site residue. Catalysis depends on residues histidine 358 and lysine 486.

This sequence belongs to the GPI family.

It is found in the cytoplasm. The catalysed reaction is alpha-D-glucose 6-phosphate = beta-D-fructose 6-phosphate. The protein operates within carbohydrate biosynthesis; gluconeogenesis. Its pathway is carbohydrate degradation; glycolysis; D-glyceraldehyde 3-phosphate and glycerone phosphate from D-glucose: step 2/4. Functionally, catalyzes the reversible isomerization of glucose-6-phosphate to fructose-6-phosphate. This Bordetella petrii (strain ATCC BAA-461 / DSM 12804 / CCUG 43448) protein is Glucose-6-phosphate isomerase.